The sequence spans 171 residues: Macro domain-containing protein RSc0334 (171 aa).

One can recognise a Macro domain in the interval M1–R171.

It belongs to the MacroD-type family.

The sequence is that of Macro domain-containing protein RSc0334 from Ralstonia nicotianae (strain ATCC BAA-1114 / GMI1000) (Ralstonia solanacearum).